The following is a 518-amino-acid chain: Probable bifunctional methylthioribulose-1-phosphate dehydratase/enolase-phosphatase E1 (518 aa).

A methylthioribulose-1-phosphate dehydratase region spans residues 1 to 242 (MACCGGGRGE…AIKLYQLGID (242 aa)). A substrate-binding site is contributed by cysteine 114. Residues histidine 132 and histidine 134 each contribute to the Zn(2+) site. Catalysis depends on glutamate 157, which acts as the Proton donor/acceptor; for methylthioribulose-1-phosphate dehydratase activity. A Zn(2+)-binding site is contributed by histidine 207. Positions 279-518 (VVLDIEGTTT…FRTIKSFSEI (240 aa)) are enolase-phosphatase E1. Residues aspartate 282 and glutamate 284 each contribute to the Mg(2+) site. Residues 417-418 (SS) and lysine 451 each bind substrate. Aspartate 477 contacts Mg(2+).

It in the N-terminal section; belongs to the aldolase class II family. MtnB subfamily. In the C-terminal section; belongs to the HAD-like hydrolase superfamily. MasA/MtnC family. The cofactor is Zn(2+). Mg(2+) serves as cofactor.

It carries out the reaction 5-(methylsulfanyl)-D-ribulose 1-phosphate = 5-methylsulfanyl-2,3-dioxopentyl phosphate + H2O. The catalysed reaction is 5-methylsulfanyl-2,3-dioxopentyl phosphate + H2O = 1,2-dihydroxy-5-(methylsulfanyl)pent-1-en-3-one + phosphate. Its pathway is amino-acid biosynthesis; L-methionine biosynthesis via salvage pathway; L-methionine from S-methyl-5-thio-alpha-D-ribose 1-phosphate: step 2/6. The protein operates within amino-acid biosynthesis; L-methionine biosynthesis via salvage pathway; L-methionine from S-methyl-5-thio-alpha-D-ribose 1-phosphate: step 3/6. It functions in the pathway amino-acid biosynthesis; L-methionine biosynthesis via salvage pathway; L-methionine from S-methyl-5-thio-alpha-D-ribose 1-phosphate: step 4/6. The polypeptide is Probable bifunctional methylthioribulose-1-phosphate dehydratase/enolase-phosphatase E1 (Oryza sativa subsp. indica (Rice)).